The primary structure comprises 576 residues: Proline--tRNA ligase (576 aa).

This sequence belongs to the class-II aminoacyl-tRNA synthetase family. ProS type 1 subfamily. As to quaternary structure, homodimer.

Its subcellular location is the cytoplasm. The enzyme catalyses tRNA(Pro) + L-proline + ATP = L-prolyl-tRNA(Pro) + AMP + diphosphate. Functionally, catalyzes the attachment of proline to tRNA(Pro) in a two-step reaction: proline is first activated by ATP to form Pro-AMP and then transferred to the acceptor end of tRNA(Pro). As ProRS can inadvertently accommodate and process non-cognate amino acids such as alanine and cysteine, to avoid such errors it has two additional distinct editing activities against alanine. One activity is designated as 'pretransfer' editing and involves the tRNA(Pro)-independent hydrolysis of activated Ala-AMP. The other activity is designated 'posttransfer' editing and involves deacylation of mischarged Ala-tRNA(Pro). The misacylated Cys-tRNA(Pro) is not edited by ProRS. The sequence is that of Proline--tRNA ligase from Psychrobacter sp. (strain PRwf-1).